The chain runs to 114 residues: Large ribosomal subunit protein uL18 (114 aa).

Belongs to the universal ribosomal protein uL18 family. As to quaternary structure, part of the 50S ribosomal subunit; part of the 5S rRNA/L5/L18/L25 subcomplex. Contacts the 5S and 23S rRNAs.

Functionally, this is one of the proteins that bind and probably mediate the attachment of the 5S RNA into the large ribosomal subunit, where it forms part of the central protuberance. The polypeptide is Large ribosomal subunit protein uL18 (Porphyromonas gingivalis (strain ATCC BAA-308 / W83)).